Consider the following 363-residue polypeptide: Suberization-associated anionic peroxidase (363 aa).

The N-terminal stretch at 1 to 20 (MGFRLSHLSLALSFVALALA) is a signal peptide. N-linked (GlcNAc...) asparagine glycosylation is present at Asn-36. 2 cysteine pairs are disulfide-bonded: Cys-80/Cys-159 and Cys-111/Cys-116. Residue His-109 is the Proton acceptor of the active site. Ca(2+) is bound by residues Asp-110, Val-113, Gly-115, and Asp-117. N-linked (GlcNAc...) asparagine glycans are attached at residues Asn-126, Asn-161, and Asn-199. Cystine bridges form between Cys-166–Cys-352 and Cys-245–Cys-264. Pro-208 contributes to the substrate binding site. N-linked (GlcNAc...) asparagine glycans are attached at residues Asn-213 and Asn-225. His-238 lines the heme b pocket. A Ca(2+)-binding site is contributed by Thr-239. Asn-263 carries an N-linked (GlcNAc...) asparagine glycan. 3 residues coordinate Ca(2+): Asp-277, Thr-279, and Asp-284.

This sequence belongs to the peroxidase family. Classical plant (class III) peroxidase subfamily. It depends on Ca(2+) as a cofactor. Heme b serves as cofactor.

The protein localises to the secreted. It catalyses the reaction 2 a phenolic donor + H2O2 = 2 a phenolic radical donor + 2 H2O. Functionally, removal of H(2)O(2), oxidation of toxic reductants, biosynthesis and degradation of lignin, suberization, auxin catabolism, response to environmental stresses such as wounding, pathogen attack and oxidative stress. These functions might be dependent on each isozyme/isoform in each plant tissue. Suggested to catalyze the deposition of the aromatic residues of suberin on the cell wall and thus play a role in cell-suberization. This is Suberization-associated anionic peroxidase from Solanum tuberosum (Potato).